The sequence spans 1224 residues: DNA-directed RNA polymerase subunit beta'' (1224 aa).

Zn(2+) contacts are provided by Cys233, Cys308, Cys315, and Cys318.

The protein belongs to the RNA polymerase beta' chain family. RpoC2 subfamily. As to quaternary structure, in plastids the minimal PEP RNA polymerase catalytic core is composed of four subunits: alpha, beta, beta', and beta''. When a (nuclear-encoded) sigma factor is associated with the core the holoenzyme is formed, which can initiate transcription. The cofactor is Zn(2+).

Its subcellular location is the plastid. It is found in the chloroplast. The enzyme catalyses RNA(n) + a ribonucleoside 5'-triphosphate = RNA(n+1) + diphosphate. Functionally, DNA-dependent RNA polymerase catalyzes the transcription of DNA into RNA using the four ribonucleoside triphosphates as substrates. This Pinus thunbergii (Japanese black pine) protein is DNA-directed RNA polymerase subunit beta''.